Consider the following 129-residue polypeptide: Large ribosomal subunit protein bL12 (129 aa).

The protein belongs to the bacterial ribosomal protein bL12 family. In terms of assembly, homodimer. Part of the ribosomal stalk of the 50S ribosomal subunit. Forms a multimeric L10(L12)X complex, where L10 forms an elongated spine to which 2 to 4 L12 dimers bind in a sequential fashion. Binds GTP-bound translation factors.

In terms of biological role, forms part of the ribosomal stalk which helps the ribosome interact with GTP-bound translation factors. Is thus essential for accurate translation. The chain is Large ribosomal subunit protein bL12 from Photobacterium profundum (strain SS9).